A 158-amino-acid polypeptide reads, in one-letter code: Small ribosomal subunit protein uS13 (158 aa).

This sequence belongs to the universal ribosomal protein uS13 family. In terms of assembly, part of the 30S ribosomal subunit. Forms a loose heterodimer with protein S19. Forms two bridges to the 50S subunit in the 70S ribosome.

Its function is as follows. Located at the top of the head of the 30S subunit, it contacts several helices of the 16S rRNA. In the 70S ribosome it contacts the 23S rRNA (bridge B1a) and protein L5 of the 50S subunit (bridge B1b), connecting the 2 subunits; these bridges are implicated in subunit movement. The sequence is that of Small ribosomal subunit protein uS13 from Picrophilus torridus (strain ATCC 700027 / DSM 9790 / JCM 10055 / NBRC 100828 / KAW 2/3).